Here is a 482-residue protein sequence, read N- to C-terminus: tRNA sulfurtransferase (482 aa).

Residues 61–165 (PVIADALTRI…NDKLMLVKAR (105 aa)) form the THUMP domain. ATP-binding positions include 183–184 (LI), Lys265, Gly287, and Gln296. A disulfide bridge links Cys344 with Cys456. A Rhodanese domain is found at 404–482 (FDADQVILDI…GFTNVKVYRP (79 aa)). Catalysis depends on Cys456, which acts as the Cysteine persulfide intermediate.

Belongs to the ThiI family.

It localises to the cytoplasm. It catalyses the reaction [ThiI sulfur-carrier protein]-S-sulfanyl-L-cysteine + a uridine in tRNA + 2 reduced [2Fe-2S]-[ferredoxin] + ATP + H(+) = [ThiI sulfur-carrier protein]-L-cysteine + a 4-thiouridine in tRNA + 2 oxidized [2Fe-2S]-[ferredoxin] + AMP + diphosphate. The catalysed reaction is [ThiS sulfur-carrier protein]-C-terminal Gly-Gly-AMP + S-sulfanyl-L-cysteinyl-[cysteine desulfurase] + AH2 = [ThiS sulfur-carrier protein]-C-terminal-Gly-aminoethanethioate + L-cysteinyl-[cysteine desulfurase] + A + AMP + 2 H(+). It functions in the pathway cofactor biosynthesis; thiamine diphosphate biosynthesis. In terms of biological role, catalyzes the ATP-dependent transfer of a sulfur to tRNA to produce 4-thiouridine in position 8 of tRNAs, which functions as a near-UV photosensor. Also catalyzes the transfer of sulfur to the sulfur carrier protein ThiS, forming ThiS-thiocarboxylate. This is a step in the synthesis of thiazole, in the thiamine biosynthesis pathway. The sulfur is donated as persulfide by IscS. In Serratia proteamaculans (strain 568), this protein is tRNA sulfurtransferase.